The chain runs to 568 residues: Urease subunit alpha (568 aa).

Residues 130–568 (GGIDTHIHFI…LPMAQRYFLF (439 aa)) enclose the Urease domain. Ni(2+) is bound by residues histidine 135, histidine 137, and lysine 218. Lysine 218 carries the post-translational modification N6-carboxylysine. Position 220 (histidine 220) interacts with substrate. Ni(2+) is bound by residues histidine 247 and histidine 273. Histidine 321 functions as the Proton donor in the catalytic mechanism. Aspartate 361 contributes to the Ni(2+) binding site.

It belongs to the metallo-dependent hydrolases superfamily. Urease alpha subunit family. Heterotrimer of UreA (gamma), UreB (beta) and UreC (alpha) subunits. Three heterotrimers associate to form the active enzyme. The cofactor is Ni cation. Post-translationally, carboxylation allows a single lysine to coordinate two nickel ions.

It is found in the cytoplasm. It catalyses the reaction urea + 2 H2O + H(+) = hydrogencarbonate + 2 NH4(+). It functions in the pathway nitrogen metabolism; urea degradation; CO(2) and NH(3) from urea (urease route): step 1/1. The protein is Urease subunit alpha of Burkholderia pseudomallei (strain 1106a).